We begin with the raw amino-acid sequence, 817 residues long: Actin filament-associated protein 1-like 2 (817 aa).

A Phosphotyrosine modification is found at Tyr-56. Residues 63–164 (HKQQNAESQD…KGKSAPHQWP (102 aa)) form a disordered region. Positions 123–139 (YYEEAEPYDTSLNEDGE) are enriched in acidic residues. PH domains lie at 175–271 (DARI…EVSG) and 353–447 (SLET…SESG). Ser-408 is subject to Phosphoserine. Residue Tyr-413 is modified to Phosphotyrosine. Ser-484 is modified (phosphoserine). Positions 512–528 (TTAGEAPEEATPATDAP) are enriched in low complexity. Disordered stretches follow at residues 512-657 (TTAG…KLGK) and 754-786 (GTTVDTTHLESVSPRPKAATPTPAPDCTPVNSA). A coiled-coil region spans residues 652 to 748 (EIKLGKNRTE…VKDSLRKAEA (97 aa)). Residues 754–763 (GTTVDTTHLE) are compositionally biased toward polar residues. Low complexity predominate over residues 767-782 (PRPKAATPTPAPDCTP).

In terms of assembly, interacts with SRC. Interacts with LCK when tyrosine phosphorylated. Tyrosine phosphorylated (by SRC).

Its subcellular location is the cytoplasm. May play a role in a signaling cascade by enhancing the kinase activity of SRC. Contributes to SRC-regulated transcription activation. This chain is Actin filament-associated protein 1-like 2 (AFAP1L2), found in Bos taurus (Bovine).